We begin with the raw amino-acid sequence, 362 residues long: Probable dual-specificity RNA methyltransferase RlmN (362 aa).

E105 (proton acceptor) is an active-site residue. Residues 111 to 344 (HEYGNSICVT…VTIRREQGHD (234 aa)) form the Radical SAM core domain. C118 and C349 are oxidised to a cystine. Positions 125, 129, and 132 each coordinate [4Fe-4S] cluster. S-adenosyl-L-methionine contacts are provided by residues 175 to 176 (GE), S207, 230 to 232 (SLH), and N306. The active-site S-methylcysteine intermediate is the C349.

The protein belongs to the radical SAM superfamily. RlmN family. [4Fe-4S] cluster is required as a cofactor.

The protein resides in the cytoplasm. It catalyses the reaction adenosine(2503) in 23S rRNA + 2 reduced [2Fe-2S]-[ferredoxin] + 2 S-adenosyl-L-methionine = 2-methyladenosine(2503) in 23S rRNA + 5'-deoxyadenosine + L-methionine + 2 oxidized [2Fe-2S]-[ferredoxin] + S-adenosyl-L-homocysteine. The enzyme catalyses adenosine(37) in tRNA + 2 reduced [2Fe-2S]-[ferredoxin] + 2 S-adenosyl-L-methionine = 2-methyladenosine(37) in tRNA + 5'-deoxyadenosine + L-methionine + 2 oxidized [2Fe-2S]-[ferredoxin] + S-adenosyl-L-homocysteine. Its function is as follows. Specifically methylates position 2 of adenine 2503 in 23S rRNA and position 2 of adenine 37 in tRNAs. The chain is Probable dual-specificity RNA methyltransferase RlmN from Bacillus cereus (strain B4264).